A 332-amino-acid polypeptide reads, in one-letter code: Ketol-acid reductoisomerase (NADP(+)) (332 aa).

A KARI N-terminal Rossmann domain is found at 3–183 (TEIFYDADAD…GGARAGVIKT (181 aa)). NADP(+)-binding positions include 26–29 (YGSQ), S52, S54, and 84–87 (DTKQ). Residue H109 is part of the active site. G135 provides a ligand contact to NADP(+). Positions 184–329 (TFTEETETDL…KKLRSLMSWT (146 aa)) constitute a KARI C-terminal knotted domain. D192, E196, E228, and E232 together coordinate Mg(2+). S253 contacts substrate.

It belongs to the ketol-acid reductoisomerase family. It depends on Mg(2+) as a cofactor.

The enzyme catalyses (2R)-2,3-dihydroxy-3-methylbutanoate + NADP(+) = (2S)-2-acetolactate + NADPH + H(+). It carries out the reaction (2R,3R)-2,3-dihydroxy-3-methylpentanoate + NADP(+) = (S)-2-ethyl-2-hydroxy-3-oxobutanoate + NADPH + H(+). Its pathway is amino-acid biosynthesis; L-isoleucine biosynthesis; L-isoleucine from 2-oxobutanoate: step 2/4. The protein operates within amino-acid biosynthesis; L-valine biosynthesis; L-valine from pyruvate: step 2/4. Involved in the biosynthesis of branched-chain amino acids (BCAA). Catalyzes an alkyl-migration followed by a ketol-acid reduction of (S)-2-acetolactate (S2AL) to yield (R)-2,3-dihydroxy-isovalerate. In the isomerase reaction, S2AL is rearranged via a Mg-dependent methyl migration to produce 3-hydroxy-3-methyl-2-ketobutyrate (HMKB). In the reductase reaction, this 2-ketoacid undergoes a metal-dependent reduction by NADPH to yield (R)-2,3-dihydroxy-isovalerate. In Saccharopolyspora erythraea (strain ATCC 11635 / DSM 40517 / JCM 4748 / NBRC 13426 / NCIMB 8594 / NRRL 2338), this protein is Ketol-acid reductoisomerase (NADP(+)).